A 628-amino-acid polypeptide reads, in one-letter code: tRNA (carboxymethyluridine(34)-5-O)-methyltransferase alkbh8 (628 aa).

An RRM domain is found at 43-123; that stretch reads QSLVVANGGL…ITLYLSFVEK (81 aa). The region spanning 218–335 is the Fe2OG dioxygenase domain; that stretch reads DPDQLTINQY…RTSFTFRKVR (118 aa). A 2-oxoglutarate-binding site is contributed by 225-227; the sequence is NQY. Fe cation contacts are provided by His236 and Asp238. His240 is a binding site for Zn(2+). His290 provides a ligand contact to Fe cation. Positions 326 and 332 each coordinate 2-oxoglutarate. Zn(2+) is bound by residues Cys339, Cys341, and Cys347. The interval 410 to 628 is methyltransferase domain; sequence ADVGCGNGKY…GNWCVILEKL (219 aa). Residues 563 to 582 form a disordered region; it reads PTNKSKVTPENKEQNEKEHG. Over residues 569 to 582 the composition is skewed to basic and acidic residues; that stretch reads VTPENKEQNEKEHG.

Belongs to the alkB family. Fe(2+) is required as a cofactor.

The protein resides in the cytoplasm. It is found in the nucleus. The enzyme catalyses 5-(carboxymethyl)uridine(34) in tRNA + S-adenosyl-L-methionine = 5-(2-methoxy-2-oxoethyl)uridine(34) in tRNA + S-adenosyl-L-homocysteine. Its function is as follows. Catalyzes the methylation of 5-carboxymethyl uridine to 5-methylcarboxymethyl uridine at the wobble position of the anticodon loop in tRNA via its methyltransferase domain. Catalyzes the last step in the formation of 5-methylcarboxymethyl uridine at the wobble position of the anticodon loop in target tRNA. Has a preference for tRNA(Arg) and tRNA(Glu), and does not bind tRNA(Lys). Binds tRNA and catalyzes the iron and alpha-ketoglutarate dependent hydroxylation of 5-methylcarboxymethyl uridine at the wobble position of the anticodon loop in tRNA via its dioxygenase domain, giving rise to 5-(S)-methoxycarbonylhydroxymethyluridine; has a preference for tRNA(Gly). Required for normal survival after DNA damage. May inhibit apoptosis and promote cell survival and angiogenesis. The sequence is that of tRNA (carboxymethyluridine(34)-5-O)-methyltransferase alkbh8 (alkbh8) from Xenopus tropicalis (Western clawed frog).